We begin with the raw amino-acid sequence, 193 residues long: MAEIRRKLVIVGDGACGKTCLLIVFSKGTFPEVYVPTVFENYVADVEVDGKHVELALWDTAGQEDYDRLRPLSYPDSHVILICFAVDSPDSLDNVQEKWISEVLHFCQGLPIILVGCKKDLRHDPKTIEELNKTSQKPVTPEQGEEVRKKIGAYKYLECSARTNEGVREVFEAATRAALLTKTHKSKKKCSIL.

12-19 (GDGACGKT) provides a ligand contact to GTP. Residues 34–42 (YVPTVFENY) carry the Effector region motif. GTP is bound by residues 59–63 (DTAGQ) and 117–120 (CKKD). Cysteine methyl ester is present on cysteine 190. Cysteine 190 carries the S-geranylgeranyl cysteine lipid modification. A propeptide spans 191–193 (SIL) (removed in mature form).

Belongs to the small GTPase superfamily. Rho family.

It is found in the cell membrane. Has a role in cell polarity, primary and secondary germ tube emergence and cell wall deposition. This is GTP-binding protein rhoA (rhoA) from Emericella nidulans (strain FGSC A4 / ATCC 38163 / CBS 112.46 / NRRL 194 / M139) (Aspergillus nidulans).